A 577-amino-acid chain; its full sequence is Moesin (577 aa).

Residues P2 to R295 form the FERM domain. S74 bears the Phosphoserine mark. The residue at position 79 (K79) is an N6-acetyllysine. An N6-succinyllysine modification is found at K83. A [IL]-x-C-x-x-[DE] motif motif is present at residues I115 to E120. Residue Y116 is modified to Phosphotyrosine. C117 is subject to S-nitrosocysteine. N6-acetyllysine occurs at positions 139 and 165. The segment covering L375–E401 has biased composition (basic and acidic residues). 2 disordered regions span residues L375–D409 and A466–V518. Residue S407 is modified to Phosphoserine. Acidic residues predominate over residues A476–G487. A compositionally biased stretch (basic and acidic residues) spans A492–V518. S527 carries the post-translational modification Phosphoserine. T558 is subject to Phosphothreonine; by ROCK2 and STK10.

In terms of assembly, in resting T-cells, part of a PAG1-NHERF1-MSN complex which is disrupted upon TCR activation. Interacts with NHERF1. Interacts with PPP1R16B. Interacts with PDZD8. Interacts with SELPLG and SYK; these interactions mediate the activation of SYK by SELPLG. Interacts with PDPN (via cytoplasmic domain); this interaction activates RHOA and promotes epithelial-mesenchymal transition. Interacts with SPN/CD43 cytoplasmic tail. Interacts with CD44. Interacts with ICAM2. Interacts with ICAM3 (via C-terminus). Interacts with PDZD8. Interacts with F-actin. Interacts with CD46. Interacts with PTPN6. Post-translationally, phosphorylation on Thr-558 is crucial for the formation of microvilli-like structures. Phosphorylation by ROCK2 suppresses the head-to-tail association of the N-terminal and C-terminal halves resulting in an opened conformation which is capable of actin and membrane-binding. Phosphorylation on Thr-558 by STK10 negatively regulates lymphocyte migration and polarization. S-nitrosylation of Cys-117 is induced by interferon-gamma and oxidatively-modified low-densitity lipoprotein (LDL(ox)) implicating the iNOS-S100A8/9 transnitrosylase complex.

It is found in the cell membrane. It localises to the cytoplasm. The protein localises to the cytoskeleton. Its subcellular location is the apical cell membrane. The protein resides in the cell projection. It is found in the microvillus membrane. It localises to the microvillus. Its activity is regulated as follows. A head-to-tail association, of the N-terminal and C-terminal halves results in a closed conformation (inactive form) which is incapable of actin or membrane-binding. Its function is as follows. Ezrin-radixin-moesin (ERM) family protein that connects the actin cytoskeleton to the plasma membrane and thereby regulates the structure and function of specific domains of the cell cortex. Tethers actin filaments by oscillating between a resting and an activated state providing transient interactions between moesin and the actin cytoskeleton. Once phosphorylated on its C-terminal threonine, moesin is activated leading to interaction with F-actin and cytoskeletal rearrangement. These rearrangements regulate many cellular processes, including cell shape determination, membrane transport, and signal transduction. The role of moesin is particularly important in immunity acting on both T and B-cells homeostasis and self-tolerance, regulating lymphocyte egress from lymphoid organs. Modulates phagolysosomal biogenesis in macrophages. Participates also in immunologic synapse formation. The chain is Moesin from Bos taurus (Bovine).